The following is a 236-amino-acid chain: Giant extracellular hemoglobin linker 2 chain (236 aa).

The LDL-receptor class A domain maps to 66 to 108; sequence NGCEPRHFQCGGSAMECISDLLTCDGSPDCANGADEDSDVCHI. Intrachain disulfides connect Cys68–Cys82, Cys75–Cys95, and Cys89–Cys106.

In terms of assembly, disulfide-linked dimer of identical chains. A model is proposed for the subunit structure of the Tylorrhynchus hemoglobin, consisting of 216 polypeptides chains, 192 heme-containing chains, and 24 linker chains.

Acts as a linker for the assembly of heme-containing chains in the construction of giant hemoglobin. This chain is Giant extracellular hemoglobin linker 2 chain, found in Tylorrhynchus heterochetus (Japanese palolo worm).